The chain runs to 262 residues: uncharacterized protein (262 aa).

Residues 41 to 118 (ELQKNEKIDK…EEKAEDFINK (78 aa)) are a coiled coil.

This is an uncharacterized protein from Plasmodium falciparum (isolate 3D7).